A 237-amino-acid polypeptide reads, in one-letter code: MVKKTSGRGQRDLKVKVKTARGRKLSSTRWLERQLNDPYVAAARRDGYRGRAAYKIIDLDDKYRFLVPGARVVDLGCAPGGWCQVAVKRVNALGEKSGKAVGRIIGLDLQEMEPIAGCELHQLDFMEDDADLKVKDWLGGRADVVMSDMAASASGHKQTDHMRIMALCEAAAELAFDVLEPGGTFVAKVLAGGAEGTLQRLLKQRFKKVANVKPGASRADSSEKFVVATGFRGRDEA.

5 residues coordinate S-adenosyl-L-methionine: G80, W82, D108, D124, and D148. K188 (proton acceptor) is an active-site residue.

Belongs to the class I-like SAM-binding methyltransferase superfamily. RNA methyltransferase RlmE family.

It is found in the cytoplasm. It catalyses the reaction uridine(2552) in 23S rRNA + S-adenosyl-L-methionine = 2'-O-methyluridine(2552) in 23S rRNA + S-adenosyl-L-homocysteine + H(+). Its function is as follows. Specifically methylates the uridine in position 2552 of 23S rRNA at the 2'-O position of the ribose in the fully assembled 50S ribosomal subunit. The sequence is that of Ribosomal RNA large subunit methyltransferase E from Jannaschia sp. (strain CCS1).